Reading from the N-terminus, the 166-residue chain is Probable chemoreceptor glutamine deamidase CheD (166 aa).

Belongs to the CheD family.

The enzyme catalyses L-glutaminyl-[protein] + H2O = L-glutamyl-[protein] + NH4(+). Its function is as follows. Probably deamidates glutamine residues to glutamate on methyl-accepting chemotaxis receptors (MCPs), playing an important role in chemotaxis. The chain is Probable chemoreceptor glutamine deamidase CheD from Oceanobacillus iheyensis (strain DSM 14371 / CIP 107618 / JCM 11309 / KCTC 3954 / HTE831).